Consider the following 524-residue polypeptide: 56 kDa type-specific antigen (524 aa).

The signal sequence occupies residues 1-22; it reads MKKIMLIASAMSALSLPFSASA. The helical transmembrane segment at 67 to 87 threads the bilayer; it reads LTTGLPFGGTLAAGMTIAPGF. Disordered regions lie at residues 112–132 and 387–422; these read SKGE…RKRF and EKLA…KGKE. 2 stretches are compositionally biased toward basic and acidic residues: residues 395-405 and 413-422; these read EDAKNQGEGDC and EKSKEGKGKE. The helical transmembrane segment at 472–492 threads the bilayer; it reads TGMVASGALGVAINAAEGVYV.

The protein resides in the cell membrane. May be an adherent factor for rickettsial adsorption to the host-cell surface and a determinant of virulence of individual rickettsial strain. It is the major outer membrane protein. The polypeptide is 56 kDa type-specific antigen (Orientia tsutsugamushi (Rickettsia tsutsugamushi)).